Reading from the N-terminus, the 103-residue chain is Interleukin-8 (103 aa).

The N-terminal stretch at 1–25 (MTSKLAVAFLAVFLLSAALCEAAVL) is a signal peptide. R27 bears the Citrulline mark. 2 disulfide bridges follow: C34–C61 and C36–C77.

This sequence belongs to the intercrine alpha (chemokine CxC) family. Homodimer. Interacts with TNFAIP6 (via Link domain); this interaction interferes with chemokine binding to glycosaminoglycans. Citrullination at Arg-27 prevents proteolysis, and dampens tissue inflammation, it also enhances leukocytosis, possibly through impaired chemokine clearance from the blood circulation. In terms of tissue distribution, alveolar macrophages.

Its subcellular location is the secreted. Functionally, chemotactic factor that mediates inflammatory response by attracting neutrophils, basophils, and T-cells to clear pathogens and protect the host from infection. Also plays an important role in neutrophil activation. Released in response to an inflammatory stimulus, exerts its effect by binding to the G-protein-coupled receptors CXCR1 and CXCR2, primarily found in neutrophils, monocytes and endothelial cells. G-protein heterotrimer (alpha, beta, gamma subunits) constitutively binds to CXCR1/CXCR2 receptor and activation by IL8 leads to beta and gamma subunits release from Galpha (GNAI2 in neutrophils) and activation of several downstream signaling pathways including PI3K and MAPK pathways. The sequence is that of Interleukin-8 (CXCL8) from Sus scrofa (Pig).